The following is a 208-amino-acid chain: Large ribosomal subunit protein uL3 (208 aa).

Gln149 is modified (N5-methylglutamine).

It belongs to the universal ribosomal protein uL3 family. Part of the 50S ribosomal subunit. Forms a cluster with proteins L14 and L19. In terms of processing, methylated by PrmB.

Functionally, one of the primary rRNA binding proteins, it binds directly near the 3'-end of the 23S rRNA, where it nucleates assembly of the 50S subunit. This is Large ribosomal subunit protein uL3 from Haemophilus influenzae (strain PittGG).